A 361-amino-acid polypeptide reads, in one-letter code: Anthranilate phosphoribosyltransferase (361 aa).

5-phospho-alpha-D-ribose 1-diphosphate is bound by residues G80, 83-84, T88, 90-93, 108-116, and S120; these read GD, NVST, and KHGNYSVSS. An anthranilate-binding site is contributed by G80. S92 lines the Mg(2+) pocket. Residue N111 participates in anthranilate binding. R166 provides a ligand contact to anthranilate. Mg(2+)-binding residues include D224 and E225. The disordered stretch occupies residues 338-361; sequence EGDGEAASTDSAAASTTAGPEDDD. Over residues 343–355 the composition is skewed to low complexity; it reads AASTDSAAASTTA.

Belongs to the anthranilate phosphoribosyltransferase family. As to quaternary structure, homodimer. Requires Mg(2+) as cofactor.

The catalysed reaction is N-(5-phospho-beta-D-ribosyl)anthranilate + diphosphate = 5-phospho-alpha-D-ribose 1-diphosphate + anthranilate. Its pathway is amino-acid biosynthesis; L-tryptophan biosynthesis; L-tryptophan from chorismate: step 2/5. Functionally, catalyzes the transfer of the phosphoribosyl group of 5-phosphorylribose-1-pyrophosphate (PRPP) to anthranilate to yield N-(5'-phosphoribosyl)-anthranilate (PRA). The protein is Anthranilate phosphoribosyltransferase of Halorubrum lacusprofundi (strain ATCC 49239 / DSM 5036 / JCM 8891 / ACAM 34).